The sequence spans 418 residues: Secreted aspartic protease 5 (418 aa).

Positions 1–18 (MFLKNILSVLAFALLIDA) are cleaved as a signal peptide. The propeptide at 19 to 76 (APVKRSPGFVTLDFNVKRSLVDPDDPTVEAKRSPLFLEFTPSEFPVDETGRDGDVDKR) is activation peptide. Residues 90–404 (YTADITVGSD…NLDDKKISMA (315 aa)) form the Peptidase A1 domain. Residue Asp-108 is part of the active site. 108–110 (DTG) serves as a coordination point for pepstatin A. Cysteines 123 and 135 form a disulfide. 161-162 (GD) lines the pepstatin A pocket. Glu-268 contributes to the Zn(2+) binding site. The active site involves Asp-294. 294–298 (DSGTT) is a binding site for pepstatin A. A disulfide bond links Cys-332 and Cys-370.

The protein belongs to the peptidase A1 family.

The protein resides in the secreted. The enzyme catalyses Preferential cleavage at the carboxyl of hydrophobic amino acids, but fails to cleave 15-Leu-|-Tyr-16, 16-Tyr-|-Leu-17 and 24-Phe-|-Phe-25 of insulin B chain. Activates trypsinogen, and degrades keratin.. With respect to regulation, inhibited by pepstatin A analogs. In terms of biological role, secreted aspartic peptidases (SAPs) are a group of ten acidic hydrolases considered as key virulence factors. These enzymes supply the fungus with nutrient amino acids as well as are able to degrade the selected host's proteins involved in the immune defense. Moreover, acts toward human hemoglobin though limited proteolysis to generate a variety of antimicrobial hemocidins, enabling to compete with the other microorganisms of the same physiological niche using the microbicidal peptides generated from the host protein. The protein is Secreted aspartic protease 5 of Candida albicans (strain SC5314 / ATCC MYA-2876) (Yeast).